We begin with the raw amino-acid sequence, 37 residues long: MKVRSSVKRMCDNCKVIRRHGRVLVICTNVKHKQRQG.

This sequence belongs to the bacterial ribosomal protein bL36 family.

The polypeptide is Large ribosomal subunit protein bL36 (Deinococcus geothermalis (strain DSM 11300 / CIP 105573 / AG-3a)).